Consider the following 533-residue polypeptide: Atypical kinase COQ8B, mitochondrial (533 aa).

The chain crosses the membrane as a helical span at residues 93-109 (LASFGGLAVGLGLGALA). The KxGQ motif signature appears at 156-159 (KIGQ). In terms of domain architecture, Protein kinase spans 192 to 424 (MMRVLEEELG…DRVLQKSQDL (233 aa)). The AAAS motif signature appears at 217–220 (AAAS). ATP-binding positions include S220, K238, and 325-328 (MELA). D368 functions as the Proton acceptor in the catalytic mechanism. ATP-binding residues include N373 and D387.

It belongs to the protein kinase superfamily. ADCK protein kinase family. Homodimer; homodimerizes via its transmembrane region. Interacts with COQ6 and COQ7. Interacts with the multi-subunit COQ enzyme complex, composed of at least COQ3, COQ4, COQ5, COQ6, COQ7 and COQ9.

The protein localises to the mitochondrion membrane. The protein resides in the cytoplasm. Its subcellular location is the cytosol. It localises to the cell membrane. It functions in the pathway cofactor biosynthesis; ubiquinone biosynthesis. Its function is as follows. Atypical kinase involved in the biosynthesis of coenzyme Q, also named ubiquinone, an essential lipid-soluble electron transporter for aerobic cellular respiration. Its substrate specificity is still unclear: may act as a protein kinase that mediates phosphorylation of COQ3. According to other reports, acts as a small molecule kinase, possibly a lipid kinase that phosphorylates a prenyl lipid in the ubiquinone biosynthesis pathway, as suggested by its ability to bind coenzyme Q lipid intermediates. However, the small molecule kinase activity was not confirmed by another publication. Required for podocyte migration. The polypeptide is Atypical kinase COQ8B, mitochondrial (Mus musculus (Mouse)).